The primary structure comprises 168 residues: MDRVGKYGLFIKRISPKDADITKESLETVNNMLVFLAEKLTKQANIIIDQKTLRHDAFLWLLTDIQGELGKHSQDFANSVLYGEKELVFPTKRTENLMRKNTCLRISQSAVKTLTAILEYFCGQIMEASFSQAKKSKRKRIRPIDIEAAISQDKELHSMFGKGVISGR.

The protein resides in the host nucleus. The protein localises to the host cytoplasm. It localises to the virion. Its function is as follows. Histone-like protein that is recruited to viral factories during viral replication and participates in viral DNA packaging and virion production probably by forming unstable nucleosome-like particles. May compact the viral DNA. This chain is Histone doublet miniH2B-H2A, found in Melbournevirus (MelV).